The following is a 255-amino-acid chain: MTVGVLALQGSFNEHIAALRRLGVQGVEIRKADQLLTVSSLIIPGGESTTMAKLAEYHNLFPALREFVKMGKPVWGTCAGLIFLADRAVGQKEGGQELVGGLDCTVHRNFFGSQIQSFEADILVPQLTSQEGGPETYRGVFIRAPAVLDVGPDVEVLADYPVPSNKVLYSSSTVQIQEEDALPETKVIVAVKQGNLLATAFHPELTADTRWHSYFIKMTKEIEQGASSSSSKTIVSVGETSAGPEPAKPDLPIFQ.

Position 46-48 (46-48) interacts with L-glutamine; it reads GES. Residue C78 is the Nucleophile of the active site. L-glutamine contacts are provided by residues R108 and 142–143; that span reads IR. Active-site charge relay system residues include H202 and E204. The disordered stretch occupies residues 225–255; it reads GASSSSSKTIVSVGETSAGPEPAKPDLPIFQ.

It belongs to the glutaminase PdxT/SNO family. As to quaternary structure, interacts with PDX1.1 or PDX1.3, but not with PDX1.2. Binds to RPA2A. As to expression, strongly expressed in roots, stems, leaves and flowers.

Its subcellular location is the cytoplasm. It carries out the reaction aldehydo-D-ribose 5-phosphate + D-glyceraldehyde 3-phosphate + L-glutamine = pyridoxal 5'-phosphate + L-glutamate + phosphate + 3 H2O + H(+). It catalyses the reaction L-glutamine + H2O = L-glutamate + NH4(+). Its pathway is cofactor biosynthesis; pyridoxal 5'-phosphate biosynthesis. Catalyzes the hydrolysis of glutamine to glutamate and ammonia as part of the biosynthesis of pyridoxal 5'-phosphate. The resulting ammonia molecule is channeled to the active site of PDX1. Involved in the indirect resistance to singlet oxygen-generating photosensitizers. In Arabidopsis thaliana (Mouse-ear cress), this protein is Probable pyridoxal 5'-phosphate synthase subunit PDX2 (PDX2).